The following is a 472-amino-acid chain: Uronate isomerase (472 aa).

This sequence belongs to the metallo-dependent hydrolases superfamily. Uronate isomerase family.

It catalyses the reaction D-glucuronate = D-fructuronate. It carries out the reaction aldehydo-D-galacturonate = keto-D-tagaturonate. It functions in the pathway carbohydrate metabolism; pentose and glucuronate interconversion. The chain is Uronate isomerase from Opitutus terrae (strain DSM 11246 / JCM 15787 / PB90-1).